The chain runs to 602 residues: Proteasome-associated ATPase (602 aa).

Over residues 1–17 (MSGPRSGSGSDGSTGRP) the composition is skewed to low complexity. The segment at 1–31 (MSGPRSGSGSDGSTGRPGDAESRRSAYEKET) is disordered. The segment covering 18-31 (GDAESRRSAYEKET) has biased composition (basic and acidic residues). Residues 19-106 (DAESRRSAYE…LKEEVDRLAQ (88 aa)) are a coiled coil. ATP is bound at residue 289-294 (GCGKTL). Residues 601–602 (YL) are docks into pockets in the proteasome alpha-ring.

The protein belongs to the AAA ATPase family. In terms of assembly, homohexamer. Assembles into a hexameric ring structure that caps the 20S proteasome core. Strongly interacts with the prokaryotic ubiquitin-like protein Pup through a hydrophobic interface; the interacting region of ARC lies in its N-terminal coiled-coil domain. There is one Pup binding site per ARC hexamer ring. Upon ATP-binding, the C-terminus of ARC interacts with the alpha-rings of the proteasome core, possibly by binding to the intersubunit pockets.

It functions in the pathway protein degradation; proteasomal Pup-dependent pathway. Its function is as follows. ATPase which is responsible for recognizing, binding, unfolding and translocation of pupylated proteins into the bacterial 20S proteasome core particle. May be essential for opening the gate of the 20S proteasome via an interaction with its C-terminus, thereby allowing substrate entry and access to the site of proteolysis. Thus, the C-termini of the proteasomal ATPase may function like a 'key in a lock' to induce gate opening and therefore regulate proteolysis. This Frankia casuarinae (strain DSM 45818 / CECT 9043 / HFP020203 / CcI3) protein is Proteasome-associated ATPase.